The following is a 393-amino-acid chain: Na(+)/H(+) antiporter NhaA 1 (393 aa).

The next 11 membrane-spanning stretches (helical) occupy residues 23 to 43 (AGGV…NSPF), 58 to 78 (LSLT…LVGL), 96 to 116 (MLPG…FTAF), 126 to 146 (GWAV…SLLG), 155 to 175 (VFLA…IAIF), 178 to 198 (AEIS…LFVM), 224 to 244 (GVHA…KAAP), 265 to 285 (VAFI…FAGL), 298 to 318 (IMLG…WLAI), 334 to 354 (LYGV…IGLL), and 367 to 387 (IGVL…LRLV).

This sequence belongs to the NhaA Na(+)/H(+) (TC 2.A.33) antiporter family.

It is found in the cell inner membrane. The enzyme catalyses Na(+)(in) + 2 H(+)(out) = Na(+)(out) + 2 H(+)(in). In terms of biological role, na(+)/H(+) antiporter that extrudes sodium in exchange for external protons. This is Na(+)/H(+) antiporter NhaA 1 from Brucella anthropi (strain ATCC 49188 / DSM 6882 / CCUG 24695 / JCM 21032 / LMG 3331 / NBRC 15819 / NCTC 12168 / Alc 37) (Ochrobactrum anthropi).